The following is a 65-amino-acid chain: pH-response transcription factor pacC/RIM101 (65 aa).

A C2H2-type 1 zinc finger spans residues 16–40 (LTCQWNSCRTTTVKRDHITSHIRVH). Residues 46–65 (HKCEFCGKSFKRPQDLKKHV) form a C2H2-type 2; degenerate zinc finger.

Belongs to the pacC/RIM101 family.

It localises to the nucleus. In terms of biological role, transcription factor that mediates regulation of both acid- and alkaline-expressed genes in response to ambient pH. At alkaline ambient pH, activates transcription of alkaline-expressed genes (including pac1 itself) and represses transcription of acid-expressed genes. This is pH-response transcription factor pacC/RIM101 (pac1) from Colletotrichum gloeosporioides (Anthracnose fungus).